Consider the following 246-residue polypeptide: MADS-box protein EJ2 (246 aa).

In terms of domain architecture, MADS-box spans 1 to 61 (MGRGRVELKR…GKLYEFCSTS (61 aa)). The region spanning 87–177 (TQNNYHEYLR…RRKLEESVAG (91 aa)) is the K-box domain.

The protein localises to the nucleus. Its function is as follows. MADS-box transcription factor that acts redundantly with J2 to control meristem maturation and inflorescence architecture. The polypeptide is MADS-box protein EJ2 (Solanum lycopersicum (Tomato)).